We begin with the raw amino-acid sequence, 244 residues long: Probable hydrolase R7 (244 aa).

The N-terminal stretch at 1–20 is a signal peptide; sequence MTKPFILLVPGSFAPETIYA. Residues Asp192 and His224 each act as charge relay system in the active site. An N-linked (GlcNAc...) asparagine glycan is attached at Asn227.

Belongs to the AB hydrolase superfamily.

Its pathway is secondary metabolite biosynthesis. Its function is as follows. Probable hydrolase; part of the gene cluster that mediates the biosynthesis of squalestatin S1 (SQS1, also known as zaragozic acid A), a lead compound for the treatment of hyper-cholesterolemia by targeting squalene synthase (SS). Both phenylalanine and benzoic acid are known precursors of SQS1 and so it is unsurprising that the cluster also contains genes potentially involved in benzoate production such as phenyl-alanine ammonia lysase (PAL) M7, which catalyzes the first step in the degradation of phenylalanine, or the NADP-dependent dehydrogenase M3. The cluster contains two PKS encoding genes. The tetraketide synthase is responsible for the biosynthesis of the tetraketide sidechain of SQS1. The biosynthesis must involve 3 rounds of chain extension. After the first and second rounds methyl-transfer occurs, and in all rounds of extension the ketoreductase and dehydratase areactive. The enoyl reductase and C-MeT are not active in the final round of extension. The other PKS is therefore likely to encode squalestatin hexaketide synthase (SQHKS). The hexaketide main chain is initiated by benzoate which is an unusual starter unit for a highly reducing polyketide synthase. The cluster also contains a gene encoding a citrate synthase-like protein R3 presumably involved in linking the hexaketide to the oxaloacetate moiety. Formation of the tetraketide CoA may be catalyzed by the M9 CoA ligase, but the mechanism of release of the tetraketide and the hexaketide from their respective PKS remains unknown, although the cluster encodes a potential esterase (M8) and a possible hydrolase (M10) which could be involved in these processes. Two acyltransferases (AT), M4 and R4, are also encoded in the cluster. M4 is responsible for loading of the tetraketide sidechain from CoA onto the squalestatin core as the final step of biosynthesis. M4 appears to have a broad substrate selectivity for its acyl CoA substrate, allowing the in vitro synthesis of novel squalestatins. The biosynthesis of SQS1 requires several oxidative steps likely performed by oxidoreductases M1, R1 and R2. Finally, in support of the identification of the cluster as being responsible for SQS1 production, the cluster contains a gene encoding a putative squalene synthase (SS) R6, suggesting a likely mechanism for self-resistance. This Phoma sp. (strain ATCC 20986 / MF5453) protein is Probable hydrolase R7.